Here is a 477-residue protein sequence, read N- to C-terminus: Glycogen synthase (477 aa).

Position 15 (lysine 15) interacts with ADP-alpha-D-glucose.

This sequence belongs to the glycosyltransferase 1 family. Bacterial/plant glycogen synthase subfamily.

The catalysed reaction is [(1-&gt;4)-alpha-D-glucosyl](n) + ADP-alpha-D-glucose = [(1-&gt;4)-alpha-D-glucosyl](n+1) + ADP + H(+). Its pathway is glycan biosynthesis; glycogen biosynthesis. Synthesizes alpha-1,4-glucan chains using ADP-glucose. In Shigella sonnei (strain Ss046), this protein is Glycogen synthase.